Consider the following 621-residue polypeptide: Methionine--tRNA ligase (621 aa).

The 'HIGH' region signature appears at 11–21 (PYANGPRHIGH). Zn(2+) is bound by residues Cys143, Cys146, Cys156, and Cys159. The 'KMSKS' region motif lies at 347-351 (KFSSS). Ser350 is an ATP binding site.

The protein belongs to the class-I aminoacyl-tRNA synthetase family. MetG type 1 subfamily. As to quaternary structure, monomer. Zn(2+) is required as a cofactor.

Its subcellular location is the cytoplasm. The catalysed reaction is tRNA(Met) + L-methionine + ATP = L-methionyl-tRNA(Met) + AMP + diphosphate. Its function is as follows. Is required not only for elongation of protein synthesis but also for the initiation of all mRNA translation through initiator tRNA(fMet) aminoacylation. This Bifidobacterium longum subsp. infantis (strain ATCC 15697 / DSM 20088 / JCM 1222 / NCTC 11817 / S12) protein is Methionine--tRNA ligase.